Consider the following 1388-residue polypeptide: ABC transporter G family member 52 (1388 aa).

Residues 1-24 (MDDAGEICSFSRSSSSAREDDEED) are disordered. The 272-residue stretch at 135-406 (TNALCITKKI…FKSVGFKCPE (272 aa)) folds into the ABC transporter 1 domain. ATP is bound at residue 168-175 (GPPGSGKT). The ABC transmembrane type-2 1 domain maps to 484–697 (ELLKANIYRE…ALNALAVNEF (214 aa)). A run of 7 helical transmembrane segments spans residues 503 to 523 (LYIF…TVFI), 541 to 561 (ALFY…GPAI), 590 to 610 (IPIS…VIGF), 621 to 641 (FLVL…IVAL), 646 to 666 (VIAS…CGFI), 675 to 695 (WWIW…LAVN), and 732 to 752 (ISIG…TICL). In terms of domain architecture, ABC transporter 2 spans 791-1043 (ITFEDIRYSV…ELIKYFEAIQ (253 aa)). 836–843 (GVSGAGKT) is a binding site for ATP. The 215-residue stretch at 1116–1330 (TQWLACLWKQ…TLNGLLTSQF (215 aa)) folds into the ABC transmembrane type-2 2 domain. 7 consecutive transmembrane segments (helical) span residues 1136 to 1156 (IVVR…MFWG), 1167 to 1183 (LFSI…AMGV), 1223 to 1243 (FPYI…MVGY), 1250 to 1270 (FLWY…YGMM), 1280 to 1300 (MSAV…GFLI), 1305 to 1325 (IPVW…LNGL), and 1357 to 1377 (LLWV…FLFG).

Belongs to the ABC transporter superfamily. ABCG family. PDR (TC 3.A.1.205) subfamily.

The protein localises to the membrane. In terms of biological role, may be a general defense protein. In Oryza sativa subsp. japonica (Rice), this protein is ABC transporter G family member 52.